A 128-amino-acid polypeptide reads, in one-letter code: Virion-associated protein (128 aa).

2 coiled-coil regions span residues 1 to 30 (MNLA…ILAK) and 37 to 58 (ESSN…EMKE). The disordered stretch occupies residues 98–128 (FDVGNEGMGSSTNPNALKWPPTEKPQPWPPR). Residues 119–128 (TEKPQPWPPR) are compositionally biased toward pro residues. Residues 122 to 128 (PQPWPPR) are capsid binding.

It belongs to the caulimovirus ORF III family. Homotetramer, through coiled-coil domain. Homotrimer when interacts with icosehadral capsid. Interacts with capsid protein, and with Movement protein.

It is found in the virion. It localises to the host cell junction. Its subcellular location is the host plasmodesma. Functionally, plays a role in virus cell-to-cell and plant-to-plant transmission. Interacts with virion icosahedral capsid and movement protein, thereby facilitating virion cell-to-cell transmission through plasmodesmata opened by viral movement protein. Also interacts with aphid transmission factor, attaching the virion to aphid stylet when the animal feeds on an virus infected plant. Aphid saliva may later detach the virion, inducing release of infectious particles when the animal feeds on a new plant. The sequence is that of Virion-associated protein from Carnation etched ring virus (CERV).